Consider the following 737-residue polypeptide: 1,4-alpha-glucan branching enzyme GlgB (737 aa).

Asp-419 (nucleophile) is an active-site residue. The Proton donor role is filled by Glu-472.

This sequence belongs to the glycosyl hydrolase 13 family. GlgB subfamily. Monomer.

The catalysed reaction is Transfers a segment of a (1-&gt;4)-alpha-D-glucan chain to a primary hydroxy group in a similar glucan chain.. The protein operates within glycan biosynthesis; glycogen biosynthesis. Catalyzes the formation of the alpha-1,6-glucosidic linkages in glycogen by scission of a 1,4-alpha-linked oligosaccharide from growing alpha-1,4-glucan chains and the subsequent attachment of the oligosaccharide to the alpha-1,6 position. This chain is 1,4-alpha-glucan branching enzyme GlgB, found in Cellvibrio japonicus (strain Ueda107) (Pseudomonas fluorescens subsp. cellulosa).